The chain runs to 879 residues: Alanine--tRNA ligase (879 aa).

His-566, His-570, Cys-668, and His-672 together coordinate Zn(2+).

The protein belongs to the class-II aminoacyl-tRNA synthetase family. Zn(2+) serves as cofactor.

The protein resides in the cytoplasm. It carries out the reaction tRNA(Ala) + L-alanine + ATP = L-alanyl-tRNA(Ala) + AMP + diphosphate. Functionally, catalyzes the attachment of alanine to tRNA(Ala) in a two-step reaction: alanine is first activated by ATP to form Ala-AMP and then transferred to the acceptor end of tRNA(Ala). Also edits incorrectly charged Ser-tRNA(Ala) and Gly-tRNA(Ala) via its editing domain. This is Alanine--tRNA ligase from Clostridium perfringens (strain 13 / Type A).